We begin with the raw amino-acid sequence, 492 residues long: Heat shock factor protein 4 (492 aa).

The DNA-binding element occupies 17-122; sequence VPAFLGKLWA…LLERVRRKVP (106 aa). A hydrophobic repeat HR-A/B region spans residues 129-203; it reads SRWRPEDLSR…GPLQTGPSST (75 aa). Residues 245–322 form an interactions with DUSP26, MAPK1 and MAPK2 region; that stretch reads LPETTLGLSP…ECDFCVTAPP (78 aa). The tract at residues 263 to 282 is disordered; the sequence is SDIPEDSPSPEGHRLSPSGG. K293 is covalently cross-linked (Glycyl lysine isopeptide (Lys-Gly) (interchain with G-Cter in SUMO)). S298 carries the phosphoserine modification. The tract at residues 337-378 is disordered; sequence GSYSPEGPRSVQQPEPRGPREVPDRGTLGLDRGNRSPESLLP. The hydrophobic repeat HR-C stretch occupies residues 364–389; the sequence is LGLDRGNRSPESLLPPMLLRPAPETL.

It belongs to the HSF family. Homotrimer. Exhibits constitutive DNA binding and forms trimers even in the absence of stress. Interacts with ALKBH4, DUSP26, MAPK1, MAPK2, MAPK8 and MAP kinase p38. Post-translationally, phosphorylated mainly on serine residues. Phosphorylation on Ser-298 promotes sumoylation on Lys-293. Isoform HSF4B is constitutively sumoylated. Sumoylation represses the transcriptional activity and is promoted by phosphorylation on Ser-298. HSFA is not sumoylated. In terms of tissue distribution, preferentially expressed in brain and lung. Also found in the eye. Slightly detected in liver and skeletal muscle. Isoform B is the major species in various tissues.

It is found in the nucleus. Functionally, heat-shock transcription factor that specifically binds heat shock promoter elements (HSE). Required for denucleation and organelle rupture and degradation that occur during eye lens terminal differentiation, when fiber cells that compose the lens degrade all membrane-bound organelles in order to provide lens with transparency to allow the passage of light. In this process, may regulate denucleation of lens fiber cells in part by activating DNASE2B transcription. May be involved in DNA repair through the transcriptional regulation of RAD51. May up-regulate p53/TP53 protein in eye lens fiber cells, possibly through protein stabilization. In the eye lens, controls the expression of alpha-crystallin B chain/CRYAB and consequently may be involved in the regulation of lysosomal acidification. Transcriptional repressor. In terms of biological role, transcriptional activator. This chain is Heat shock factor protein 4 (Hsf4), found in Mus musculus (Mouse).